A 446-amino-acid chain; its full sequence is 3-phosphoshikimate 1-carboxyvinyltransferase (446 aa).

Residues Lys-27, Ser-28, and Arg-32 each coordinate 3-phosphoshikimate. Lys-27 is a binding site for phosphoenolpyruvate. The phosphoenolpyruvate site is built by Gly-100 and Arg-128. 3-phosphoshikimate-binding residues include Ser-177, Gln-179, Asp-330, and Lys-357. Gln-179 contributes to the phosphoenolpyruvate binding site. The active-site Proton acceptor is Asp-330. Phosphoenolpyruvate contacts are provided by Arg-361 and Arg-406.

Belongs to the EPSP synthase family. As to quaternary structure, monomer.

It is found in the cytoplasm. The catalysed reaction is 3-phosphoshikimate + phosphoenolpyruvate = 5-O-(1-carboxyvinyl)-3-phosphoshikimate + phosphate. Its pathway is metabolic intermediate biosynthesis; chorismate biosynthesis; chorismate from D-erythrose 4-phosphate and phosphoenolpyruvate: step 6/7. Its function is as follows. Catalyzes the transfer of the enolpyruvyl moiety of phosphoenolpyruvate (PEP) to the 5-hydroxyl of shikimate-3-phosphate (S3P) to produce enolpyruvyl shikimate-3-phosphate and inorganic phosphate. The polypeptide is 3-phosphoshikimate 1-carboxyvinyltransferase (Sphingopyxis alaskensis (strain DSM 13593 / LMG 18877 / RB2256) (Sphingomonas alaskensis)).